The following is a 628-amino-acid chain: tRNA uridine 5-carboxymethylaminomethyl modification enzyme MnmG (628 aa).

Residues 14-19 (GAGHAG), valine 126, and serine 181 contribute to the FAD site. 273–287 (GPRYCPSIEDKVVRF) serves as a coordination point for NAD(+). Glutamine 370 is a binding site for FAD.

The protein belongs to the MnmG family. Homodimer. Heterotetramer of two MnmE and two MnmG subunits. FAD serves as cofactor.

The protein localises to the cytoplasm. Its function is as follows. NAD-binding protein involved in the addition of a carboxymethylaminomethyl (cmnm) group at the wobble position (U34) of certain tRNAs, forming tRNA-cmnm(5)s(2)U34. The chain is tRNA uridine 5-carboxymethylaminomethyl modification enzyme MnmG from Exiguobacterium sibiricum (strain DSM 17290 / CCUG 55495 / CIP 109462 / JCM 13490 / 255-15).